The chain runs to 122 residues: Large ribosomal subunit protein uL14 (122 aa).

It belongs to the universal ribosomal protein uL14 family. Part of the 50S ribosomal subunit. Forms a cluster with proteins L3 and L19. In the 70S ribosome, L14 and L19 interact and together make contacts with the 16S rRNA in bridges B5 and B8.

In terms of biological role, binds to 23S rRNA. Forms part of two intersubunit bridges in the 70S ribosome. This is Large ribosomal subunit protein uL14 from Kineococcus radiotolerans (strain ATCC BAA-149 / DSM 14245 / SRS30216).